A 2211-amino-acid polypeptide reads, in one-letter code: MAMALAVGAPSEQRGNLPYNTLKDGPTVDSMKATTDGKNGQGESAFWDTCVHTVFREHCQRAPNSPAVNAWDGSFTYAELDSLSDAIASVLILSGVGPESIIPIYMQKSRWTTVAILGVLKSGGAFTLLDPSHPRSRVEEISKEIQARFILTSEKLSKQCLEMFSVLVVEHLSRACLPSPGQAGHTRSRPENAAYIAFTSGSTGKPKGIVIEHRSYCSGARSHLKVFGIDSTSRVLQFASYAFDVSIMETLSTLMAGGCLCVMSESERSDPNLFVVSYKNLRISHCFMTPSFARTVPWTECCNPPPTLIVGGELMRPSDARAYKEMGIRCMNAYGPAECSVNVSVQSRVEAAVDPRNIGYTTGATAWIISPENPEELMPTGTVGELLVEGPIVGRGYLNDPKATRQAFIDTPAWLRRHRKGTSYQHRVYRTGDLASLDSITGALLLHGRKDAQVKIRGQRVELPDIEHHLQLTLPNDNAEVIVEKVTFSDDGSEKLIAFVLVRPSNTDSVIGNTGDRLFLAPQSQIMEQFAISKKHLQTHLPSYMVPDIFIPISTLPQTASGKTDRKALRTRAAALSRRDVQCFLLSPAGGKRPPSTPKEATIRSLYSNVLNLPIDLIGMDDTFLRLGGDSLQAIRLVAAARAAGLILHAKDILSSQSTLAEQSKRAGLIQTIDRTWESSPPFALLHGPTRHAIVDLAQKQCRVPSNLIEDIYPCTALQEGMFITSLKHPGMYTGQIIFDIPDRMELPRLKAAWLSVVSENAALRTRIIETHEGLMQAVIVDDFVWEEETDEMLLSSDGEALEITKIGVPLVRFRYRPRHRQLMMTIHHSIWDGWSLRLVHEQLQRAYIGRDLLPSTSYRSFIQYTQELPGADEFWASELAGVNAPIFPTLPSGNYRPRVNASHRHVVRNLASTGKEEHTAATYIHLAWSLLVAHYTDADETVYGVTVNGRSADVPGIENIVGPTIATVPTRIRVNEEDTVEMALDHVQDALARMIPYEQAGLQRISRCSRDASEACRFQNLLIIEAPTDSDVDCEKNEAGNFSIIGGTTQTGMDYTAFSSYAMMLVFRTSANKSAISFDITYDAQVIGHDEVERMAHQFEHVLRHIYTLATGRIGDISFIGPRDIEQVQQWNSSMPPADNRFLQELIFAQCSRRPQASAIISWDGSWTYRELWAHSSFFARQLQRYGVTRGTPVAVCLDRSRWSIAVILGVLLARGTCVLIDLLAPRQRVRDILQIAGTGILVHSHATATLTSGLCPTVINVSFLAAQSDSSQPEFPFTLETWGGTPEDLAFIIFTSGSTGHPKGIEMPHRTLSTSISHHSAGMRVTSSSRVLHFSSYAFDVSIYEIFTTLAAGGTICVPSEFDRMNNLAGFIQDTQVNWAFLTPSTARSLNPADVPLLTTLVLGGEAVTHESVEVWAKGRSLINGYGPAEATICGVGNIPEAGWKSGVVGRIIGGLGWVTVPSDPNRLAAVGAVGELLLEGPFLARGYLNLPEVTKAAFIDPPSWRTRIPAPSPYSFLYRTGDLVRYQPDGSIQYVGRKDSRVKLRGQLVDLGAVEASVMRVYPAAGQVVADVLVSENTARLIAMVKLGPSVTENHDGPMFAAPDLVFNEAAASIQARLRAIVPAYMVPSMFIPLRHIPRTLTGKTDRRRLRDKILSLSHSDLQRYMMSSSTKTPMSDDNERRLQEIWAEVLQLPCEAIGREDSFLSLGGESLATMKMVALARRVGFMFAVTDVMNNTSLSTLARSRHLITEQAILTSSPSLSLPTIEGESLQEILRPLLNAGHIQGGNDIAAIHPVTAAQAFLVQRYPWSHFQFDLSGAVSPSKLQTACTALMARFTILRTVFVEHAGCLLQLVLREVPNRVHEITTNEPLDDFCNSVCQQQQDVCVVNSTTLPTLFTLVSNRQLNRHRLLLRLAHAQYDLTTIPLIVQSLADEYNRTLRSGFSADFGYYLSHHKRQNNDDRSHNFWKRYLSGSSMMSTNQTADPTTVQERVFHVTGSCIIIPTSHPPDITIATAVKAAVCLVLAARTGCTDIVIGQTVDARCSSADSTLDQIVGPCTNYIPYRLSVCCSKTALEYLRSAQAQHTTCLRYSSLDLDQIVAKCTSWPSSTQFGYIVQHQDTGAELALTLGGDTTSLPMTSYGRVFPQGEVWIGSTPCSTGLRIDVIALSAVLSQKDAQTMAEEVGAALEKLLGCGYRRLSHLIGNTFAT.

The adenylation 1 stretch occupies residues 76–475 (TYAELDSLSD…IEHHLQLTLP (400 aa)). Positions 594-671 (PPSTPKEATI…EQSKRAGLIQ (78 aa)) constitute a Carrier 1 domain. O-(pantetheine 4'-phosphoryl)serine is present on serine 631. Residues 710–975 (EDIYPCTALQ…IATVPTRIRV (266 aa)) are condensation 1. The tract at residues 1169-1563 (TYRELWAHSS…LGAVEASVMR (395 aa)) is adenylation 2. Positions 1677–1756 (PMSDDNERRL…RSRHLITEQA (80 aa)) constitute a Carrier 2 domain. Residue serine 1714 is modified to O-(pantetheine 4'-phosphoryl)serine. The interval 1814–2069 (HFQFDLSGAV…CTNYIPYRLS (256 aa)) is condensation 2.

It belongs to the NRP synthetase family.

It catalyses the reaction L-proline + L-tryptophan + 2 ATP = brevianamide F + 2 AMP + 2 diphosphate + 2 H(+). It participates in mycotoxin biosynthesis. Functionally, nonribosomal peptide synthetase; part of the gene cluster that mediates the biosynthesis of fumitremorgins, indole alkaloids that carry not only intriguing chemical structures, but also interesting biological and pharmacological activities. The biosynthesis of fumitremorgin-type alkaloids begins by condensation of the two amino acids L-tryptophan and L-proline to brevianamide F, catalyzed by the non-ribosomal peptide synthetase ftmA. Brevianamide F is then prenylated by the prenyltransferase ftmPT1/ftmB in the presence of dimethylallyl diphosphate, resulting in the formation of tryprostatin B. The three cytochrome P450 monooxygenases, ftmP450-1/ftmC, ftmP450-2/ftmE and ftmP450-3/FtmG, are responsible for the conversion of tryprostatin B to 6-hydroxytryprostatin B, tryprostatin A to fumitremorgin C and fumitremorgin C to 12,13-dihydroxyfumitremorgin C, respectively. The putative methyltransferase ftmMT/ftmD is expected for the conversion of 6-hydroxytryprostatin B to tryprostatin A. FtmPT2/FtmH catalyzes the prenylation of 12,13-dihydroxyfumitre-morgin C in the presence of dimethylallyl diphosphate, resulting in the formation of fumitremorgin B. Fumitremorgin B is further converted to verruculogen by ftmOx1/ftmF via the insertion of an endoperoxide bond between the two prenyl moieties. In some fungal species, verruculogen is further converted to fumitremorgin A, but the enzymes involved in this step have not been identified yet. This is Nonribosomal peptide synthetase 13 from Aspergillus fumigatus (Neosartorya fumigata).